Consider the following 790-residue polypeptide: Kinesin-like protein KIN-14D (790 aa).

Disordered regions lie at residues 1–56 (MPLR…DVGS) and 116–139 (DKEN…LDAK). The interval 1 to 66 (MPLRNQNRAP…TEECGKVEFT (66 aa)) is globular. Positions 16–33 (VKKEALSSIPFDKRRKET) are enriched in basic and acidic residues. A compositionally biased stretch (polar residues) spans 34-55 (QGTGRRQVLSTVNRQDANSDVG). 2 coiled-coil regions span residues 117-316 (KENL…HVVQ) and 347-426 (SLEE…LELK). Positions 127 to 139 (AEKRYSDKELDAK) are enriched in basic and acidic residues. In terms of domain architecture, Kinesin motor spans 428 to 769 (NIRVFCRVRP…LRFAARVNAC (342 aa)). An ATP-binding site is contributed by 513-520 (GQTGSGKT).

This sequence belongs to the TRAFAC class myosin-kinesin ATPase superfamily. Kinesin family. KIN-14 subfamily. Slightly expressed in anther lobes with pollen mother cells at anther stage 5. Strongly expressed at anther stage 6 in the tapetum and meiotic cells. Also detected in the gynoecium and the ovule.

It localises to the cytoplasm. It is found in the cytoskeleton. The protein resides in the phragmoplast. Functionally, kinesin that supports microtubule movement in an ATP-dependent manner and that functions as a minus-end directed motor as well as a plus-end tracking protein. During mitosis, is involved in early spindle assembly. Participates in the capture of antiparallel interpolar microtubules and helps in generating force to coalign microtubules. This is Kinesin-like protein KIN-14D from Arabidopsis thaliana (Mouse-ear cress).